The chain runs to 561 residues: DNA ligase B (561 aa).

Residue Lys-125 is the N6-AMP-lysine intermediate of the active site.

Belongs to the NAD-dependent DNA ligase family. LigB subfamily.

It carries out the reaction NAD(+) + (deoxyribonucleotide)n-3'-hydroxyl + 5'-phospho-(deoxyribonucleotide)m = (deoxyribonucleotide)n+m + AMP + beta-nicotinamide D-nucleotide.. In terms of biological role, catalyzes the formation of phosphodiester linkages between 5'-phosphoryl and 3'-hydroxyl groups in double-stranded DNA using NAD as a coenzyme and as the energy source for the reaction. In Escherichia coli O127:H6 (strain E2348/69 / EPEC), this protein is DNA ligase B.